The sequence spans 487 residues: WRKY transcription factor 1 (487 aa).

Positions 69–104 are disordered; it reads QSEVDVASPVSEKAPKVSESSGALSLQSGSEGNSPF. Ser-76 bears the Phosphoserine mark. Over residues 86–101 the composition is skewed to polar residues; sequence SESSGALSLQSGSEGN. Residues 105–169 constitute a DNA-binding region (WRKY 1); sequence IREKVMEDGY…YFGEHDHPKP (65 aa). Cys-136, Cys-141, His-164, and His-166 together coordinate Zn(2+). Residues 255-287 are disordered; it reads SSRITGDNTHKDYNSPTAKRRKKGGNIELSPVE. A Nuclear localization signal motif is present at residues 273–277; the sequence is KRRKK. Residues 301–366 constitute a DNA-binding region (WRKY 2); the sequence is TLFDIVNDGY…YEGKHDHDMP (66 aa). The Zn(2+) site is built by Cys-332, Cys-337, His-361, and His-363. The disordered stretch occupies residues 380-487; the sequence is EVDDKEGDAN…QKPKTEPAQS (108 aa). Polar residues predominate over residues 390 to 401; the sequence is KTPQSSTLQSIT. Composition is skewed to basic and acidic residues over residues 429 to 462 and 476 to 487; these read LDEK…DDKT and EEQKPKTEPAQS.

It belongs to the WRKY group I family. In terms of tissue distribution, expressed to similar levels in root and flower, to a somewhat lower level in stem and to low levels in leaf and siliques.

The protein localises to the nucleus. In terms of biological role, transcription factor. Binds to a 5'-CGTTGACCGAG-3' consensus core sequence which contains a W box, a frequently occurring elicitor-responsive cis-acting element. This chain is WRKY transcription factor 1, found in Arabidopsis thaliana (Mouse-ear cress).